Consider the following 233-residue polypeptide: Ribosomal RNA small subunit methyltransferase G (233 aa).

The interval 1–25 (MASRQSPMAVSQPDHADRSAALQLT) is disordered. S-adenosyl-L-methionine contacts are provided by G85, F90, and R155.

It belongs to the methyltransferase superfamily. RNA methyltransferase RsmG family.

It is found in the cytoplasm. It catalyses the reaction guanosine(527) in 16S rRNA + S-adenosyl-L-methionine = N(7)-methylguanosine(527) in 16S rRNA + S-adenosyl-L-homocysteine. Functionally, specifically methylates the N7 position of guanine in position 527 of 16S rRNA. The polypeptide is Ribosomal RNA small subunit methyltransferase G (Rhodopseudomonas palustris (strain BisB5)).